The sequence spans 383 residues: Putative glutamate--cysteine ligase 2-2 (383 aa).

The protein belongs to the glutamate--cysteine ligase type 2 family. YbdK subfamily.

The enzyme catalyses L-cysteine + L-glutamate + ATP = gamma-L-glutamyl-L-cysteine + ADP + phosphate + H(+). ATP-dependent carboxylate-amine ligase which exhibits weak glutamate--cysteine ligase activity. This chain is Putative glutamate--cysteine ligase 2-2, found in Legionella pneumophila (strain Paris).